The sequence spans 123 residues: Large ribosomal subunit protein uL18 (123 aa).

It belongs to the universal ribosomal protein uL18 family. In terms of assembly, part of the 50S ribosomal subunit; part of the 5S rRNA/L5/L18/L25 subcomplex. Contacts the 5S and 23S rRNAs.

In terms of biological role, this is one of the proteins that bind and probably mediate the attachment of the 5S RNA into the large ribosomal subunit, where it forms part of the central protuberance. In Desulforudis audaxviator (strain MP104C), this protein is Large ribosomal subunit protein uL18.